The chain runs to 152 residues: Transcriptional regulator MraZ (152 aa).

SpoVT-AbrB domains are found at residues 5–52 (ATLV…PLPE) and 81–124 (ASEC…DETT).

This sequence belongs to the MraZ family. In terms of assembly, forms oligomers.

The protein resides in the cytoplasm. It localises to the nucleoid. In terms of biological role, negatively regulates its own expression and that of the subsequent genes in the proximal part of the division and cell wall (dcw) gene cluster. Acts by binding directly to DNA. May also regulate the expression of genes outside the dcw cluster. The polypeptide is Transcriptional regulator MraZ (Salmonella gallinarum (strain 287/91 / NCTC 13346)).